The sequence spans 232 residues: MAVFALIPAAGMGKRMGASINKQYLLLGGMPILARTLEVFERSPLVDGIFVVIPADEIPFCREQVVERHGFSKVRSIVAGGAERQQSVLNGLRAMEGTAGEYDVILIHDGVRPFVTEDILGRATATARENDGALVAVPAKDTVKVVEDGIITATPSRETLWLAQTPQAFRYGVIRAAHEVADAERFLGTDDAMLVERLGRQVRIVLGDYRNVKITTPEDMVLAEAFIKEKLP.

This sequence belongs to the IspD/TarI cytidylyltransferase family. IspD subfamily.

The catalysed reaction is 2-C-methyl-D-erythritol 4-phosphate + CTP + H(+) = 4-CDP-2-C-methyl-D-erythritol + diphosphate. The protein operates within isoprenoid biosynthesis; isopentenyl diphosphate biosynthesis via DXP pathway; isopentenyl diphosphate from 1-deoxy-D-xylulose 5-phosphate: step 2/6. Functionally, catalyzes the formation of 4-diphosphocytidyl-2-C-methyl-D-erythritol from CTP and 2-C-methyl-D-erythritol 4-phosphate (MEP). The protein is 2-C-methyl-D-erythritol 4-phosphate cytidylyltransferase of Geobacter metallireducens (strain ATCC 53774 / DSM 7210 / GS-15).